The primary structure comprises 369 residues: Protein VP6 (369 aa).

A disordered region spans residues 20-208 (LEQRSIAPLL…EEAKVGGGDR (189 aa)). Residues 29–66 (LREKNSTEAKSKLKEDGEKKNKSEKEENKIHDDRRVES) are compositionally biased toward basic and acidic residues. Composition is skewed to gly residues over residues 92–111 (TGGG…GGVG) and 162–171 (TSGGLQGRGG). A compositionally biased stretch (basic and acidic residues) spans 196-208 (TEGEEAKVGGGDR).

The protein belongs to the orbivirus VP6 family.

Its subcellular location is the virion. The protein is Protein VP6 (S9) of African horse sickness virus 3 (AHSV-3).